A 340-amino-acid chain; its full sequence is Beta-1,3-N-acetylglucosaminyltransferase radical fringe (340 aa).

The Cytoplasmic segment spans residues 1 to 4 (MKIT). A helical; Signal-anchor for type II membrane protein membrane pass occupies residues 5–25 (YVGLIKVCFLVFLLLCATVLL). At 26–340 (NISWRQRDSS…AFSLAEDPTR (315 aa)) the chain is on the lumenal side. The N-linked (GlcNAc...) asparagine glycan is linked to Asn-42. Residue Arg-110 participates in substrate binding. N-linked (GlcNAc...) asparagine glycosylation is present at Asn-149. 2 disulfide bridges follow: Cys-150–Cys-161 and Cys-179–Cys-242. Asp-183 is a binding site for substrate. Asp-184 serves as a coordination point for Mn(2+). Asp-272 is an active-site residue. His-296 is a Mn(2+) binding site.

This sequence belongs to the glycosyltransferase 31 family. It depends on Mn(2+) as a cofactor.

The protein localises to the golgi apparatus membrane. The enzyme catalyses 3-O-(alpha-L-fucosyl)-L-threonyl-[EGF-like domain protein] + UDP-N-acetyl-alpha-D-glucosamine = 3-O-(N-acetyl-beta-D-glucosaminyl-(1-&gt;3)-alpha-L-fucosyl)-L-threonyl-[EGF-like domain protein] + UDP + H(+). The catalysed reaction is 3-O-(alpha-L-fucosyl)-L-seryl-[EGF-like domain protein] + UDP-N-acetyl-alpha-D-glucosamine = 3-O-(N-acetyl-beta-D-glucosaminyl-(1-&gt;3)-alpha-L-fucosyl)-L-seryl-[EGF-like domain protein] + UDP + H(+). Its function is as follows. Glycosyltransferase that initiates the elongation of O-linked fucose residues attached to EGF-like repeats in the extracellular domain of Notch molecules. This chain is Beta-1,3-N-acetylglucosaminyltransferase radical fringe (rfng), found in Xenopus laevis (African clawed frog).